Consider the following 145-residue polypeptide: Secreted RxLR effector protein PSE1 (145 aa).

A signal peptide spans 1 to 21 (MRLSSFIVVGAAVVNLLTSGS). Positions 53–73 (RLLRYHSNNNRGGDEDIAEER) match the RxLR-dEER motif.

The protein belongs to the RxLR effector family.

The protein resides in the secreted. It is found in the host cell. Secreted effector that impairs both plant effector-triggered immunity and pathogen-associated molecular patterns (PAMP)-triggered immunity (PTI). Suppresses plant cell death as a part of the plant defense responses. Facilitates plant infection by altering the auxin content at the roots penetration points of the of the pathogen. The sequence is that of Secreted RxLR effector protein PSE1 from Phytophthora nicotianae (Potato buckeye rot agent).